We begin with the raw amino-acid sequence, 194 residues long: Thymidine kinase (194 aa).

Residues G15–S22 and D88–Q91 contribute to the ATP site. Catalysis depends on E89, which acts as the Proton acceptor. Zn(2+) is bound by residues C145, C148, C183, and C186.

The protein belongs to the thymidine kinase family. As to quaternary structure, homotetramer.

It localises to the cytoplasm. The catalysed reaction is thymidine + ATP = dTMP + ADP + H(+). In Bacillus anthracis (strain A0248), this protein is Thymidine kinase.